The sequence spans 298 residues: Keratin-associated protein 10-11 (298 aa).

Repeat copies occupy residues 26–30, 36–40, 57–61, 79–83, 89–93, 99–103, 104–108, 109–113, 114–118, 119–123, 126–130, 136–140, 146–150, 151–155, 156–160, 168–172, 178–182, 188–192, 193–197, 203–207, 225–229, 230–234, 249–253, 256–260, and 267–271. The tract at residues 26 to 271 is 25 X 5 AA repeats of C-C-X(3); that stretch reads CCEPPCSAPS…SCQSSCCRPA (246 aa).

This sequence belongs to the KRTAP type 10 family. In terms of assembly, interacts with hair keratins. As to expression, restricted to a narrow region of the hair fiber cuticle, lying approximately 20 cell layers above the apex of the dermal papilla of the hair root; not detected in any other tissues.

Functionally, in the hair cortex, hair keratin intermediate filaments are embedded in an interfilamentous matrix, consisting of hair keratin-associated proteins (KRTAP), which are essential for the formation of a rigid and resistant hair shaft through their extensive disulfide bond cross-linking with abundant cysteine residues of hair keratins. The matrix proteins include the high-sulfur and high-glycine-tyrosine keratins. The sequence is that of Keratin-associated protein 10-11 (KRTAP10-11) from Homo sapiens (Human).